A 319-amino-acid polypeptide reads, in one-letter code: Putative replication factor C small subunit R395 (319 aa).

45 to 52 (GSPGVGKT) is a binding site for ATP.

This sequence belongs to the activator 1 small subunits family. RfcS subfamily.

Functionally, part of the RFC clamp loader complex which loads the PCNA sliding clamp onto DNA. In Acanthamoeba polyphaga mimivirus (APMV), this protein is Putative replication factor C small subunit R395.